The primary structure comprises 41 residues: Large ribosomal subunit protein bL36 (41 aa).

It belongs to the bacterial ribosomal protein bL36 family.

The sequence is that of Large ribosomal subunit protein bL36 from Rickettsia prowazekii (strain Madrid E).